Consider the following 197-residue polypeptide: Histocompatibility antigen 60c (197 aa).

An N-terminal signal peptide occupies residues Met-1 to Ala-17. Asn-51, Asn-81, and Asn-114 each carry an N-linked (GlcNAc...) asparagine glycan. Ser-177 carries GPI-anchor amidated serine lipidation. Residues Met-178–Leu-197 constitute a propeptide, removed in mature form.

The protein belongs to the NKG2D ligand family. As to expression, expressed in skin, and weakly in large intestine.

The protein resides in the cell membrane. Functionally, ligand for the KLRK1 immunosurveillance receptor. Binding to KLRK1 stimulates cell lysis in vitro. The sequence is that of Histocompatibility antigen 60c from Mus musculus (Mouse).